A 187-amino-acid chain; its full sequence is Protein GrpE (187 aa).

Positions 1 to 22 (MADEQNLDAQAQDQAAEAGAGD) are disordered. The segment covering 7 to 22 (LDAQAQDQAAEAGAGD) has biased composition (low complexity).

This sequence belongs to the GrpE family. In terms of assembly, homodimer.

The protein resides in the cytoplasm. In terms of biological role, participates actively in the response to hyperosmotic and heat shock by preventing the aggregation of stress-denatured proteins, in association with DnaK and GrpE. It is the nucleotide exchange factor for DnaK and may function as a thermosensor. Unfolded proteins bind initially to DnaJ; upon interaction with the DnaJ-bound protein, DnaK hydrolyzes its bound ATP, resulting in the formation of a stable complex. GrpE releases ADP from DnaK; ATP binding to DnaK triggers the release of the substrate protein, thus completing the reaction cycle. Several rounds of ATP-dependent interactions between DnaJ, DnaK and GrpE are required for fully efficient folding. The protein is Protein GrpE of Pseudomonas syringae pv. tomato (strain ATCC BAA-871 / DC3000).